Reading from the N-terminus, the 1368-residue chain is Indole-3-acetaldehyde oxidase (1368 aa).

Residues 19–108 (TSLVFAINGQ…GCSITTSDGL (90 aa)) enclose the 2Fe-2S ferredoxin-type domain. [2Fe-2S] cluster-binding residues include cysteine 60, cysteine 65, and cysteine 68. The FAD-binding PCMH-type domain occupies 246-427 (LHSRKYRWSS…LSLEIPSWHS (182 aa)).

This sequence belongs to the xanthine dehydrogenase family. As to quaternary structure, aldehyde oxidases (AO) are homodimers and heterodimers of AO subunits. AO-alpha is an AAO1 homodimer; AO-beta is an AAO1-AAO2 heterodimer. It depends on [2Fe-2S] cluster as a cofactor. The cofactor is FAD. Mo-molybdopterin is required as a cofactor. Predominantly expressed in roots, seedlings, mature siliques and seeds, and to lower extent in stems and rosettes. In seedlings, mostly expressed in lower part of hypocotyls and roots.

It localises to the cytoplasm. It catalyses the reaction indole-3-acetaldehyde + O2 + H2O = (indol-3-yl)acetate + H2O2 + H(+). With respect to regulation, strongly inhibited by iodoacetate and potassium cyanide (KCN). Weakly inhibited by 2-mercaptoethanol, dithiothreitol (DTT), menadione, estradiol, 4'-(9-acridinylamino)methanesulfon-m-anisidine (mAMSA), allopurinol and tritonX-100. Not affected by p-chloromercuribenzoate. Functionally, in higher plants aldehyde oxidases (AO) appear to be homo- and heterodimeric assemblies of AO subunits with probably different physiological functions. AO-alpha may be involved in the biosynthesis of auxin, and in biosynthesis of abscisic acid (ABA) in seeds. In vitro, AO-alpha uses heptaldehyde, protocatechualdehyde, benzaldehyde, indole-3-aldehyde (IAld), indole-3-acetaldehyde (IAAld), cinnamaldehyde and citral as substrates; AO-beta uses IAAld, IAld and naphtaldehyde as substrates. In Arabidopsis thaliana (Mouse-ear cress), this protein is Indole-3-acetaldehyde oxidase (AAO1).